The following is a 440-amino-acid chain: Chitinase-like protein Idgf2 (440 aa).

Positions 1-20 (MKAWIWFTFVACLFAASTEA) are cleaved as a signal peptide. A GH18 domain is found at 22-440 (SNLVCYYDSS…PILRAIKYRL (419 aa)). A disulfide bridge connects residues Cys26 and Cys53. Residue Asn220 is glycosylated (N-linked (GlcNAc...) asparagine). Cys342 and Cys425 are disulfide-bonded.

The protein belongs to the glycosyl hydrolase 18 family. IDGF subfamily. In terms of processing, glycosylated. In terms of tissue distribution, primarily expressed in yolk cells and fat body. In larvae, it is expressed in the imaginal ring and weakly expressed in imaginal disks. More strongly expressed than Idgf1 and Idgf3.

Its subcellular location is the secreted. Its function is as follows. Cooperates with insulin-like peptides to stimulate the proliferation, polarization and motility of imaginal disk cells. May act by stabilizing the binding of insulin-like peptides to its receptor through a simultaneous interaction with both molecules to form a multiprotein signaling complex. This Drosophila melanogaster (Fruit fly) protein is Chitinase-like protein Idgf2 (Idgf2).